A 593-amino-acid chain; its full sequence is MAESLNGLKRTVMCGELRESHIGQKHVVMGWVQRKRNLGGLVFVDLRDREGILQVVFGEEINKEAFEKADLVKPEYCIAVEGELVRRESPNEAMPTGMVELKGQNIKILSESETPPIYIKEDLDTDEAVRLKYRYLDLRRPDMQKIFKVRHKTAKVIRDFLDENGFLEMETPMLTKSTPEGARDYLVPSRNYPGMFYALPQSPQLFKQLLMVSGYDKYFQITKCFRDEDLRANRQPEFTQVDMELSFVDMEDVIALNEKLIQKVFKEVANVDVQLPIQRITYKEAMDKYGSDKPDLRFGMEINDITDAVKDVDFKVFKDAIENGGSVRAIKAPNCATMGRKQIDKLGEFVKTYKAKGLAWIAYKEDEIKSPIAKFLGEEGINKVIESLDAKVGDLILIVADKDSVVLQSLGALRLEMAKRLEILKDNKEFRFAWVTEFPLLSYNEEEDRYQAEHHPFTMPMDEDIEYLESDPGRVRAKAYDIVLNGEELGGGSIRIHDTKLQEKMFNVLGFTSESAWERFGFLLEAFKFGPPPHGGLAYGFDRMIMFLAGTENIKDVIAFPKNQNAYCPLTEAPNVVDEKQLGELGIGVQKQK.

Position 180 (glutamate 180) interacts with L-aspartate. Positions 204–207 (QLFK) are aspartate. Arginine 226 contributes to the L-aspartate binding site. ATP-binding positions include 226-228 (RDE) and glutamine 235. Histidine 454 lines the L-aspartate pocket. Glutamate 488 serves as a coordination point for ATP. Residue arginine 495 coordinates L-aspartate. Residue 540 to 543 (GFDR) participates in ATP binding.

It belongs to the class-II aminoacyl-tRNA synthetase family. Type 1 subfamily. As to quaternary structure, homodimer.

The protein localises to the cytoplasm. It catalyses the reaction tRNA(Asp) + L-aspartate + ATP = L-aspartyl-tRNA(Asp) + AMP + diphosphate. Catalyzes the attachment of L-aspartate to tRNA(Asp) in a two-step reaction: L-aspartate is first activated by ATP to form Asp-AMP and then transferred to the acceptor end of tRNA(Asp). This chain is Aspartate--tRNA ligase, found in Clostridium novyi (strain NT).